The following is a 678-amino-acid chain: UvrABC system protein C (678 aa).

Basic residues predominate over residues 1–13; that stretch reads MKKNISYGKHKTF. The interval 1–25 is disordered; the sequence is MKKNISYGKHKTFPSKLNGLEKQHS. Positions 69–147 constitute a GIY-YIG domain; it reads HKPGVYRMFD…IKRLHPRFNV (79 aa). In terms of domain architecture, UVR spans 257-292; it reads QSVKNDMIQAMHKAAEDLDFEQAAVYRDRLSALSHI.

This sequence belongs to the UvrC family. As to quaternary structure, interacts with UvrB in an incision complex.

It is found in the cytoplasm. Its function is as follows. The UvrABC repair system catalyzes the recognition and processing of DNA lesions. UvrC both incises the 5' and 3' sides of the lesion. The N-terminal half is responsible for the 3' incision and the C-terminal half is responsible for the 5' incision. The protein is UvrABC system protein C of Bartonella quintana (strain Toulouse) (Rochalimaea quintana).